Consider the following 959-residue polypeptide: Ataxin-2 homolog (959 aa).

Residues 13 to 92 form the Sm domain; sequence DVLSAINDMI…IVDFAYVTQE (80 aa). Disordered regions lie at residues 203-378, 392-484, 501-528, 697-831, and 867-959; these read AREI…GSRV, TAPK…SVIT, PRVA…HPAM, PPQG…QHIQ, and PMQQ…QSPP. Residues 226 to 235 are compositionally biased toward basic and acidic residues; it reads DLDKITRQED. A compositionally biased stretch (low complexity) spans 246–260; the sequence is NNSFNQQQQQRRNPN. Over residues 270 to 281 the composition is skewed to basic and acidic residues; it reads RRAEGLRGDRRN. A compositionally biased stretch (low complexity) spans 282 to 313; that stretch reads SGSSSANNSRYGAPAAAQQNYSQNQQQQQGQK. 2 stretches are compositionally biased toward polar residues: residues 341–356 and 473–484; these read RQQQ…NNNV and VSVTSENDSVIT. Low complexity-rich tracts occupy residues 504–528, 697–707, and 715–725; these read APAT…HPAM, PPQGQQQQPRY, and QQQQQQPQQQQ. 2 stretches are compositionally biased toward polar residues: residues 726–742 and 756–765; these read FSGE…SQPT and APQNGNMQAE. The span at 766 to 788 shows a compositional bias: low complexity; that stretch reads SSSNASHSGSTSSQSGQRSGSPP. The segment covering 789–798 has biased composition (pro residues); it reads GAVPPPPPPQ. Composition is skewed to low complexity over residues 822–831, 867–876, and 902–911; these read MMQQQQQHIQ, PMQQNQHPQQ, and QQQQQQQQQQ. Polar residues predominate over residues 912-922; it reads MHRQNSLPQQF. Positions 923–935 are enriched in low complexity; sequence QGNQGVNPSGQQS. Polar residues predominate over residues 948-959; it reads TPRDQQHSQSPP.

Belongs to the ataxin-2 family. As to quaternary structure, interacts (via C-terminus) with szy-20 (via C-terminus); the interaction is RNA independent. Interacts with pab-1. Interacts with gdi-1. Expressed in the central nervous system, dorsal and ventral nerve cord, intestinal lining and body-wall muscle. Expressed in the gonad.

It is found in the cytoplasm. Its subcellular location is the nucleus. In terms of biological role, probable RNA-binding protein that negatively regulates the translation of targets. Functions with RNA-binding protein szy-20 to ensure embryonic cell division, and to this end, plays a role in the regulation of centrosome assembly, position and size, and in astral microtubule outgrowth and nucleation. Required for gonad development, germ cell proliferation and for the production of oocytes. Regulates whole body growth and fat accumulation in response to food availability, and this may be through the mTOR pathway, upstream of daf-15 and rheb-1. The protein is Ataxin-2 homolog of Caenorhabditis elegans.